Here is a 205-residue protein sequence, read N- to C-terminus: Large ribosomal subunit protein uL3 (205 aa).

Residues 126-150 (GGPKTHGQSDRHRAPGSIGSTTTPG) are disordered.

It belongs to the universal ribosomal protein uL3 family. Part of the 50S ribosomal subunit. Forms a cluster with proteins L14 and L19.

In terms of biological role, one of the primary rRNA binding proteins, it binds directly near the 3'-end of the 23S rRNA, where it nucleates assembly of the 50S subunit. In Dehalococcoides mccartyi (strain ATCC BAA-2100 / JCM 16839 / KCTC 5957 / BAV1), this protein is Large ribosomal subunit protein uL3.